The sequence spans 190 residues: 6,7-dimethyl-8-ribityllumazine synthase (190 aa).

Residues Phe-23, 61–63, and 85–87 contribute to the 5-amino-6-(D-ribitylamino)uracil site; these read SFE and AVI. 90–91 serves as a coordination point for (2S)-2-hydroxy-3-oxobutyl phosphate; it reads QT. His-93 (proton donor) is an active-site residue. Phe-118 serves as a coordination point for 5-amino-6-(D-ribitylamino)uracil. Arg-132 lines the (2S)-2-hydroxy-3-oxobutyl phosphate pocket.

The protein belongs to the DMRL synthase family.

It carries out the reaction (2S)-2-hydroxy-3-oxobutyl phosphate + 5-amino-6-(D-ribitylamino)uracil = 6,7-dimethyl-8-(1-D-ribityl)lumazine + phosphate + 2 H2O + H(+). It participates in cofactor biosynthesis; riboflavin biosynthesis; riboflavin from 2-hydroxy-3-oxobutyl phosphate and 5-amino-6-(D-ribitylamino)uracil: step 1/2. Functionally, catalyzes the formation of 6,7-dimethyl-8-ribityllumazine by condensation of 5-amino-6-(D-ribitylamino)uracil with 3,4-dihydroxy-2-butanone 4-phosphate. This is the penultimate step in the biosynthesis of riboflavin. The protein is 6,7-dimethyl-8-ribityllumazine synthase of Trichormus variabilis (strain ATCC 29413 / PCC 7937) (Anabaena variabilis).